Consider the following 212-residue polypeptide: MQTVAVIDYGMGNLHSVAKALEHVGAGRVLITSDAKVIREADRIVFPGVGAIRDCMAEIRRLGFDSLVQEVSQDRPFLGICVGMQALLDSSEENGGVDCIGMFPGQVKFFGKDLHEEGEHLKVPHMGWNQVAQAVDHPLWHDIPDQARFYFVHSFYIDAANQRQVVGRGHYGLDFAAALADGSRFAVQFHPEKSHTHGLQLLQNFAAWDGRW.

Residues 3 to 212 form the Glutamine amidotransferase type-1 domain; that stretch reads TVAVIDYGMG…QNFAAWDGRW (210 aa). Catalysis depends on Cys81, which acts as the Nucleophile. Catalysis depends on residues His190 and Glu192.

As to quaternary structure, heterodimer of HisH and HisF.

Its subcellular location is the cytoplasm. It carries out the reaction 5-[(5-phospho-1-deoxy-D-ribulos-1-ylimino)methylamino]-1-(5-phospho-beta-D-ribosyl)imidazole-4-carboxamide + L-glutamine = D-erythro-1-(imidazol-4-yl)glycerol 3-phosphate + 5-amino-1-(5-phospho-beta-D-ribosyl)imidazole-4-carboxamide + L-glutamate + H(+). It catalyses the reaction L-glutamine + H2O = L-glutamate + NH4(+). Its pathway is amino-acid biosynthesis; L-histidine biosynthesis; L-histidine from 5-phospho-alpha-D-ribose 1-diphosphate: step 5/9. IGPS catalyzes the conversion of PRFAR and glutamine to IGP, AICAR and glutamate. The HisH subunit catalyzes the hydrolysis of glutamine to glutamate and ammonia as part of the synthesis of IGP and AICAR. The resulting ammonia molecule is channeled to the active site of HisF. This chain is Imidazole glycerol phosphate synthase subunit HisH, found in Pseudomonas syringae pv. syringae (strain B728a).